We begin with the raw amino-acid sequence, 67 residues long: Light-harvesting protein B-870 alpha chain (67 aa).

Residues 1-12 (MWRIWRLFDPMR) are Cytoplasmic-facing. A helical transmembrane segment spans residues 13-33 (AMVAQAVFLLGLAVLIHLMLL). His29 contributes to the a bacteriochlorophyll binding site. Residues 34–67 (GTNKYNWLDGAKKAPVATAVAPVPAEVTSLAQAK) are Periplasmic-facing.

Belongs to the antenna complex alpha subunit family. In terms of assembly, an alpha/beta heterodimer. The core complex is formed by different alpha and beta chains, binding bacteriochlorophyll molecules, and arranged most probably in tetrameric structures disposed around the reaction center. The non-pigmented gamma chains may constitute additional components.

Its subcellular location is the cell inner membrane. In terms of biological role, antenna complexes are light-harvesting systems, which transfer the excitation energy to the reaction centers. The protein is Light-harvesting protein B-870 alpha chain (pufA) of Rubrivivax gelatinosus (strain NBRC 100245 / IL144).